We begin with the raw amino-acid sequence, 432 residues long: Protein arginine N-methyltransferase 2 (432 aa).

Low complexity predominate over residues 1-11 (MESSSECSSIS). The disordered stretch occupies residues 1-22 (MESSSECSSISDFQDSTEGDDA). The region spanning 29–88 (LCMREYVVICDYVATDNTQLSLCSGDKVLLLNAVSQDWWWVNHNGTCGYVPASHLHDALN) is the SH3 domain. Positions 101 to 405 (DEEYYGSYKT…FERNSVWRRH (305 aa)) constitute an SAM-dependent MTase PRMT-type domain. Residues His-114, Arg-123, Gly-147, Glu-170, and Glu-199 each contribute to the S-adenosyl-L-methionine site. Active-site residues include Glu-213 and Glu-222.

It belongs to the class I-like SAM-binding methyltransferase superfamily. Protein arginine N-methyltransferase family. As to quaternary structure, interacts with ctnnb1.

It is found in the cytoplasm. The protein resides in the nucleus. It catalyses the reaction L-arginyl-[protein] + 2 S-adenosyl-L-methionine = N(omega),N(omega)-dimethyl-L-arginyl-[protein] + 2 S-adenosyl-L-homocysteine + 2 H(+). Its function is as follows. Arginine methyltransferase that methylates the guanidino nitrogens of arginyl residues in proteins such as histones. Involved in growth regulation. Involved in embryonic dorsal development. This chain is Protein arginine N-methyltransferase 2 (prmt2), found in Xenopus laevis (African clawed frog).